The following is a 187-amino-acid chain: UPF0340 protein str1894 (187 aa).

Belongs to the UPF0340 family.

The polypeptide is UPF0340 protein str1894 (Streptococcus thermophilus (strain CNRZ 1066)).